A 516-amino-acid polypeptide reads, in one-letter code: D-alanine--D-alanyl carrier protein ligase (516 aa).

156 to 157 (TS) contributes to the ATP binding site. Asp-203 serves as a coordination point for D-alanine. Residue 298–303 (NAYGPT) participates in ATP binding. Position 307 (Val-307) interacts with D-alanine. Residues Asp-389, 401 to 404 (YGGR), and Lys-503 each bind ATP. Position 503 (Lys-503) interacts with D-alanine.

It belongs to the ATP-dependent AMP-binding enzyme family. DltA subfamily.

It localises to the cytoplasm. It catalyses the reaction holo-[D-alanyl-carrier protein] + D-alanine + ATP = D-alanyl-[D-alanyl-carrier protein] + AMP + diphosphate. It functions in the pathway cell wall biogenesis; lipoteichoic acid biosynthesis. Functionally, catalyzes the first step in the D-alanylation of lipoteichoic acid (LTA), the activation of D-alanine and its transfer onto the D-alanyl carrier protein (Dcp) DltC. In an ATP-dependent two-step reaction, forms a high energy D-alanyl-AMP intermediate, followed by transfer of the D-alanyl residue as a thiol ester to the phosphopantheinyl prosthetic group of the Dcp. D-alanylation of LTA plays an important role in modulating the properties of the cell wall in Gram-positive bacteria, influencing the net charge of the cell wall. This Streptococcus pneumoniae (strain 70585) protein is D-alanine--D-alanyl carrier protein ligase.